The chain runs to 214 residues: Ras-like protein 2 (214 aa).

Residues 19–24, 35–41, 65–66, 122–125, and 152–154 each bind GTP; these read GVGKSC, VDEYDPT, AG, NKCD, and SAK. The Effector region signature appears at 38-46; the sequence is YDPTIEDSY. The disordered stretch occupies residues 178–197; the sequence is QGYSTGSGGSNAGGPSNKME. Position 211 is a cysteine methyl ester (cysteine 211). A lipid anchor (S-farnesyl cysteine) is attached at cysteine 211. The propeptide at 212 to 214 is removed in mature form; sequence VLM.

This sequence belongs to the small GTPase superfamily. Ras family. Interacts with farnesyltransferase beta subunit RAM1.

Its subcellular location is the cell membrane. Alternates between an inactive form bound to GDP and an active form bound to GTP. Activated by a guanine nucleotide-exchange factor (GEF) and inactivated by a GTPase-activating protein (GAP). In terms of biological role, modulates the activity of the adenylate cyclase catalytic subunit and therefore affects the biosynthesis of cyclic-AMP. Plays a role in both surface attachment and surface recognition of appressoria, a highly specialized infection structure for plant penetration. Regulates appressorium formation by coordinated regulation of cAMP signaling and Pmk1 MAPK pathways. The sequence is that of Ras-like protein 2 from Pyricularia oryzae (strain 70-15 / ATCC MYA-4617 / FGSC 8958) (Rice blast fungus).